The sequence spans 248 residues: uncharacterized protein (248 aa).

Residue 9–33 (IITGASSGIGEATAILLAEKGAKLV) participates in NADP(+) binding. Residue S141 participates in substrate binding. Y154 acts as the Proton acceptor in catalysis.

Belongs to the short-chain dehydrogenases/reductases (SDR) family.

This is an uncharacterized protein from Listeria innocua serovar 6a (strain ATCC BAA-680 / CLIP 11262).